The sequence spans 186 residues: Inner membrane-spanning protein YciB (186 aa).

5 helical membrane passes run 10-30 (IILFFAAFKVWGIYVATAVAI), 47-67 (VEPLQWLSLGVIVLFGGATLL), 76-96 (WKPTVLYWLMGGTLLVGQLVF), 121-141 (WGWTGFFATMGVLNLWVAYNF), and 149-169 (FKLFGGIGLMFAFVIAQALYL).

This sequence belongs to the YciB family.

It is found in the cell inner membrane. Plays a role in cell envelope biogenesis, maintenance of cell envelope integrity and membrane homeostasis. The chain is Inner membrane-spanning protein YciB from Acidovorax sp. (strain JS42).